We begin with the raw amino-acid sequence, 181 residues long: Histone deacetylase complex subunit SAP30L-A (181 aa).

2 disulfides stabilise this stretch: Cys-26–Cys-27 and Cys-35–Cys-71. The Atypical zinc finger occupies 26-74; the sequence is CCLIDGGERCPRPAGNASFSKRVQKSISQKKLKLDIDKNVRHLYICDFH. Residues 82 to 103 are disordered; the sequence is RNKRKRKTSDDGGDSPEHETDI. The short motif at 83–88 is the Nuclear localization signal (NLS) element; that stretch reads NKRKRK. Positions 85–87 are important for DNA and phosphoinositide binding; sequence RKR.

This sequence belongs to the SAP30 family. In terms of assembly, interacts with components of the histone deacetylase complex sin3a, hdac1 and hdac2. Binds histones and nucleosomes.

Its subcellular location is the nucleus. It localises to the nucleolus. Functions as a transcription repressor, probably via its interaction with histone deacetylase complexes. Involved in the functional recruitment of the class 1 Sin3-histone deacetylase complex (HDAC) to the nucleolus. Binds DNA, apparently without sequence-specificity, and bends bound double-stranded DNA. Binds phosphoinositol phosphates (phosphoinositol 3-phosphate, phosphoinositol 4-phosphate and phosphoinositol 5-phosphate) via the same basic sequence motif that mediates DNA binding and nuclear import. This is Histone deacetylase complex subunit SAP30L-A (sap30l-a) from Xenopus laevis (African clawed frog).